We begin with the raw amino-acid sequence, 396 residues long: Gap junction gamma-1 protein (396 aa).

The Cytoplasmic portion of the chain corresponds to 1-22 (MSWSFLTRLLEEIHNHSTFVGK). A helical transmembrane segment spans residues 23–45 (IWLTVLIAFRIALTAVGGESIYY). At 46–75 (DEQSKFVCNTEQPGCENVCYDAFAPLSHVR) the chain is on the extracellular side. A helical transmembrane segment spans residues 76–95 (FWVFQIILVATPSVMYLGYA). The Cytoplasmic segment spans residues 96–175 (IHKIAKMEHG…RRIREDGLMK (80 aa)). A disordered region spans residues 145–165 (ELESEKENKEQNQPKPKHDGR). Positions 147-156 (ESEKENKEQN) are enriched in basic and acidic residues. Residues 176–198 (IYVLQLLARTVFEVGFLIGQYFL) traverse the membrane as a helical segment. At 199 to 228 (YGFQVHPFYVCSRLPCPHKIDCFISRPTEK) the chain is on the extracellular side. Residues 229 to 248 (TIFLLIMYGVTGLCLLLNIW) form a helical membrane-spanning segment. Residues 249 to 396 (EMLHLGFGTI…SGDGKNSVWI (148 aa)) lie on the Cytoplasmic side of the membrane. Residues 355–396 (AYSHQNNPHGPREKKAKVGSKAGSNKSSASSKSGDGKNSVWI) form a disordered region. The segment covering 373-396 (GSKAGSNKSSASSKSGDGKNSVWI) has biased composition (low complexity).

Belongs to the connexin family. Gamma-type subfamily. In terms of assembly, a connexon is composed of a hexamer of connexins. Interacts with CNST.

It localises to the cell membrane. The protein localises to the cell junction. Its subcellular location is the gap junction. Its function is as follows. One gap junction consists of a cluster of closely packed pairs of transmembrane channels, the connexons, through which materials of low MW diffuse from one cell to a neighboring cell. This chain is Gap junction gamma-1 protein (GJC1), found in Canis lupus familiaris (Dog).